A 935-amino-acid chain; its full sequence is LPS-assembly protein LptD (935 aa).

A signal peptide spans 1–33; that stretch reads MALKSPAFRRKFPLLVTGGLLALQPLATSYVVA. Positions 52–85 are disordered; the sequence is KTPVNNLPPRPVHEGAAVSSGTEAAGEAETADRP. A compositionally biased stretch (low complexity) spans 65-79; the sequence is EGAAVSSGTEAAGEA.

The protein belongs to the LptD family. In terms of assembly, component of the lipopolysaccharide transport and assembly complex. Interacts with LptE and LptA.

It is found in the cell outer membrane. In terms of biological role, together with LptE, is involved in the assembly of lipopolysaccharide (LPS) at the surface of the outer membrane. The protein is LPS-assembly protein LptD of Pseudomonas putida (strain ATCC 700007 / DSM 6899 / JCM 31910 / BCRC 17059 / LMG 24140 / F1).